We begin with the raw amino-acid sequence, 190 residues long: Putative phosphatidylethanolamine-binding protein (190 aa).

It belongs to the phosphatidylethanolamine-binding protein family.

The chain is Putative phosphatidylethanolamine-binding protein from Plasmodium falciparum.